A 360-amino-acid polypeptide reads, in one-letter code: MSESVANRAVVFYNNKSLPIISSEELNLDSCYSSSEVVIRVHAAALNPVDFLLQSFAYSWLVGRGPKTFSRDYSGEVVRAGANVKDFKVGDKVSGLFQHLYGKQGTLCDYLILDPVKQPAISKLAAAGHAEYDDYVVNAAWPLVFGTAYQGLTNFGQKLGPDSKILVIGASTSVSNAFVQIAKNHLKVGTVVGICSKKSFDYNKKLGYDYLAAYDDGSVVDSVKDIIGKNLNNEKFDLIFDSVGNSDFFGCINDVLKDKGQNSQFVSLTGDKKMNYSSPRIWDSLPGLESLKRYGPFRKYNYNLFMLRSDSAFMKLGYEMISEKQYMPAIDSVYSFDDYAKAFERVKSNRSKGKVVIKIH.

This sequence belongs to the YIM1 family.

Its subcellular location is the lipid droplet. The protein resides in the mitochondrion. The polypeptide is Protein YIM1-1 (YIM1-1) (Lachancea thermotolerans (strain ATCC 56472 / CBS 6340 / NRRL Y-8284) (Yeast)).